The following is an 87-amino-acid chain: Small ribosomal subunit protein uS17 (87 aa).

This sequence belongs to the universal ribosomal protein uS17 family. In terms of assembly, part of the 30S ribosomal subunit.

Its function is as follows. One of the primary rRNA binding proteins, it binds specifically to the 5'-end of 16S ribosomal RNA. The protein is Small ribosomal subunit protein uS17 of Bacillus thuringiensis (strain Al Hakam).